A 227-amino-acid chain; its full sequence is MELVFIRHGFSEWNAKNLFTGWRDVNLTERGIEEAKSAGKKLLEAGFEFDIAFTSVLTRAIKTCNIVLEESNQLWIPQVKNWRLNERHYGALQGLDKKATAEQYGDEQVHIWRRSYDISPPDLDPQDPHSAHNDRRYAHLPSDVVPDAENLKITLERVLPFWEDQIAPALLAGKRVLVTAHGNSLRALAKHIEGISDADIMDLEIPTGQPLVYKLDDNLKVVEKYYL.

Substrate-binding positions include 7–14 (RHGFSEWN), 20–21 (TG), Arg59, 86–89 (ERHY), Lys97, 113–114 (RR), and 182–183 (GN). His8 (tele-phosphohistidine intermediate) is an active-site residue. Glu86 functions as the Proton donor/acceptor in the catalytic mechanism.

It belongs to the phosphoglycerate mutase family. BPG-dependent PGAM subfamily. In terms of assembly, homodimer.

It carries out the reaction (2R)-2-phosphoglycerate = (2R)-3-phosphoglycerate. The protein operates within carbohydrate degradation; glycolysis; pyruvate from D-glyceraldehyde 3-phosphate: step 3/5. In terms of biological role, catalyzes the interconversion of 2-phosphoglycerate and 3-phosphoglycerate. This is 2,3-bisphosphoglycerate-dependent phosphoglycerate mutase from Pasteurella multocida (strain Pm70).